The sequence spans 890 residues: Nitrate reductase [NADH] 2 (890 aa).

Cys165 provides a ligand contact to Mo-molybdopterin. The region spanning 513–588 is the Cytochrome b5 heme-binding domain; sequence SKMFSVSEVK…LEDYRIGELI (76 aa). Positions 548 and 571 each coordinate heme. The region spanning 634–746 is the FAD-binding FR-type domain; the sequence is RQKIPCKLVS…KGPLGHIEYT (113 aa). Residues 686-689, 703-707, Phe708, Phe715, 720-722, and Thr773 each bind FAD; these read RAYT, LIKVY, and LMS.

This sequence belongs to the nitrate reductase family. As to quaternary structure, homodimer. FAD is required as a cofactor. It depends on heme as a cofactor. Requires Mo-molybdopterin as cofactor.

The enzyme catalyses nitrite + NAD(+) + H2O = nitrate + NADH + H(+). Functionally, nitrate reductase is a key enzyme involved in the first step of nitrate assimilation in plants, fungi and bacteria. The protein is Nitrate reductase [NADH] 2 (NIA2) of Phaseolus vulgaris (Kidney bean).